A 1025-amino-acid polypeptide reads, in one-letter code: Multidrug resistance protein MdtC (1025 aa).

12 helical membrane passes run 3–23 (FFAL…AITL), 333–353 (EVEQ…FLFL), 360–380 (LIPA…MYLC), 387–407 (LSLM…IVVL), 431–451 (VGFT…PLLL), 463–483 (FAVT…TLTP), 528–548 (IVGL…ITIP), 853–873 (VILI…LYES), 875–895 (VHPL…LLAL), 897–917 (LFDA…IGIV), 953–973 (PIMM…ISSG), and 984–1004 (ITIV…TPVV).

The protein belongs to the resistance-nodulation-cell division (RND) (TC 2.A.6) family. MdtC subfamily. In terms of assembly, part of a tripartite efflux system composed of MdtA, MdtB and MdtC. MdtC forms a heteromultimer with MdtB.

Its subcellular location is the cell inner membrane. The sequence is that of Multidrug resistance protein MdtC from Enterobacter sp. (strain 638).